The primary structure comprises 164 residues: Nucleotide-binding protein Daro_3028 (164 aa).

It belongs to the YajQ family.

In terms of biological role, nucleotide-binding protein. The sequence is that of Nucleotide-binding protein Daro_3028 from Dechloromonas aromatica (strain RCB).